Reading from the N-terminus, the 117-residue chain is MPRAVNGTIHKNRRRRVLKDAKGFRGARSKLYRTAKSAVMKAGQWAYRDRRAKKRDFRKLWIIRINAAARENGLSYSVFMNSLKKLGINMDRKSLAELAFNDREVFNALVEKIKVAG.

Belongs to the bacterial ribosomal protein bL20 family.

Its function is as follows. Binds directly to 23S ribosomal RNA and is necessary for the in vitro assembly process of the 50S ribosomal subunit. It is not involved in the protein synthesizing functions of that subunit. The polypeptide is Large ribosomal subunit protein bL20 (Leptospira borgpetersenii serovar Hardjo-bovis (strain JB197)).